The following is a 97-amino-acid chain: Late embryogenesis abundant protein Lea5 (97 aa).

The protein belongs to the LEA type 3 family.

This Citrus sinensis (Sweet orange) protein is Late embryogenesis abundant protein Lea5 (LEA5).